The primary structure comprises 203 residues: Sarcosine oxidase subunit gamma (203 aa).

Belongs to the SoxG family. As to quaternary structure, heterotetramer composed of subunits alpha (SoxA), beta (SoxB), gamma (SoxG) and delta (SoxD).

Its subcellular location is the cytoplasm. The enzyme catalyses sarcosine + (6S)-5,6,7,8-tetrahydrofolate + O2 = (6R)-5,10-methylene-5,6,7,8-tetrahydrofolate + glycine + H2O2. The catalysed reaction is sarcosine + O2 + H2O = formaldehyde + glycine + H2O2. Its function is as follows. In the presence of tetrahydrofolate, catalyzes the oxidative demethylation of sarcosine to yield glycine, 5,10-methylenetetrahydrofolate and hydrogen peroxide. In the absence of tetrahydrofolate, catalyzes the oxidative demethylation of sarcosine to yield glycine, formaldehyde and hydrogen peroxide. This Corynebacterium sp. (strain P-1) protein is Sarcosine oxidase subunit gamma.